A 112-amino-acid chain; its full sequence is Ig kappa chain V-III region PC 7132 (112 aa).

The tract at residues 1 to 23 (DIVLTQSPASLAVSLGQRATISC) is framework-1. The cysteines at positions 23 and 92 are disulfide-linked. A complementarity-determining-1 region spans residues 24-38 (RASESVDNYGISFMN). The segment at 39–53 (WFQQKPGQPPKLLIY) is framework-2. Residues 54–60 (AASNQGS) form a complementarity-determining-2 region. Positions 61–92 (GVPARFSGSGSGTDFSLNIHPMEEDDTAMYFC) are framework-3. Residues 93 to 102 (QQSKEVPPYT) form a complementarity-determining-3 region. The tract at residues 103–112 (FGGGTKLEIK) is framework-4.

This Mus musculus (Mouse) protein is Ig kappa chain V-III region PC 7132.